Reading from the N-terminus, the 407-residue chain is Fructose-1,6-bisphosphatase, chloroplastic (407 aa).

The N-terminal 50 residues, 1–50 (MAAATASSQLIFSKPYSPSRLCPFQLCVFDAKSVLSSSRRKHVNGSGVRC), are a transit peptide targeting the chloroplast. Mg(2+) is bound by residues E126, E155, D176, L178, and D179. Residue 179-182 (DGSS) participates in substrate binding. Cysteines 203 and 223 form a disulfide. The substrate site is built by N287, Y319, Y337, Y339, and K349. E355 lines the Mg(2+) pocket.

Belongs to the FBPase class 1 family. As to quaternary structure, homotetramer. Mg(2+) is required as a cofactor.

It is found in the plastid. Its subcellular location is the chloroplast stroma. It catalyses the reaction beta-D-fructose 1,6-bisphosphate + H2O = beta-D-fructose 6-phosphate + phosphate. It functions in the pathway carbohydrate biosynthesis; Calvin cycle. The sequence is that of Fructose-1,6-bisphosphatase, chloroplastic (FBP) from Pisum sativum (Garden pea).